The following is a 378-amino-acid chain: MTNSSITAPVTDILAKARSGANLSAKEAIILLETTDNRLIAWIRETADFLRRQQTGDTVTYVINRNINFSNICEQHCSFCAFRRDEDEEGAFWLNLEEIIAKAADAVRRGATEICMQGGLNPKAKIKGNSLDYYLEIVKNLKQAFPDLHLHAFSPQEVQFIAREDGLSYEKVIASLQEAGVNSLPGTAAEVLVDEVRRVICPEKIDAATWLEIVGTAHRLGLHTTSTMLCGHIETPSQQVQHLEKIRKQQEIALENNYPAKITEFILLPFVGQSAPKPLRNRVGQDQPILADTLKLTAVARIYLGNSIKNHQPSWVKLGLQGATEALNWGCNDLGGTLMEEHITTMAGALGGTCLTVEELATAIKSLDRPARQRDTIY.

One can recognise a Radical SAM core domain in the interval 59–306 (VTYVINRNIN…TAVARIYLGN (248 aa)). Positions 73, 77, and 80 each coordinate [4Fe-4S] cluster.

This sequence belongs to the radical SAM superfamily. CofH family. As to quaternary structure, consists of two subunits, CofG and CofH. Requires [4Fe-4S] cluster as cofactor.

The enzyme catalyses 5-amino-6-(D-ribitylamino)uracil + L-tyrosine + S-adenosyl-L-methionine = 5-amino-5-(4-hydroxybenzyl)-6-(D-ribitylimino)-5,6-dihydrouracil + 2-iminoacetate + 5'-deoxyadenosine + L-methionine + H(+). Its pathway is cofactor biosynthesis; coenzyme F0 biosynthesis. Catalyzes the radical-mediated synthesis of 5-amino-5-(4-hydroxybenzyl)-6-(D-ribitylimino)-5,6-dihydrouracil from 5-amino-6-(D-ribitylamino)uracil and L-tyrosine. The polypeptide is 5-amino-6-(D-ribitylamino)uracil--L-tyrosine 4-hydroxyphenyl transferase (Microcystis aeruginosa (strain NIES-843 / IAM M-2473)).